We begin with the raw amino-acid sequence, 247 residues long: Small ribosomal subunit protein uS2 (247 aa).

It belongs to the universal ribosomal protein uS2 family.

The protein is Small ribosomal subunit protein uS2 of Ralstonia nicotianae (strain ATCC BAA-1114 / GMI1000) (Ralstonia solanacearum).